The primary structure comprises 351 residues: Transmembrane protein DDB_G0272716 (351 aa).

N-linked (GlcNAc...) asparagine glycosylation is found at asparagine 4 and asparagine 59. Helical transmembrane passes span 175–195 (FSSLFGVISGFLGIGSVTAIG) and 215–235 (VVAPICAPVLLTFGCLVGAFI). Residue asparagine 345 is glycosylated (N-linked (GlcNAc...) asparagine).

The protein resides in the membrane. The sequence is that of Transmembrane protein DDB_G0272716 from Dictyostelium discoideum (Social amoeba).